Reading from the N-terminus, the 150-residue chain is 3-hydroxyacyl-[acyl-carrier-protein] dehydratase FabZ (150 aa).

H54 is an active-site residue.

This sequence belongs to the thioester dehydratase family. FabZ subfamily.

Its subcellular location is the cytoplasm. The enzyme catalyses a (3R)-hydroxyacyl-[ACP] = a (2E)-enoyl-[ACP] + H2O. In terms of biological role, involved in unsaturated fatty acids biosynthesis. Catalyzes the dehydration of short chain beta-hydroxyacyl-ACPs and long chain saturated and unsaturated beta-hydroxyacyl-ACPs. This chain is 3-hydroxyacyl-[acyl-carrier-protein] dehydratase FabZ, found in Psychromonas ingrahamii (strain DSM 17664 / CCUG 51855 / 37).